A 286-amino-acid chain; its full sequence is 4-hydroxybenzoate octaprenyltransferase (286 aa).

The next 7 helical transmembrane spans lie at 21 to 40, 95 to 115, 142 to 162, 167 to 187, 210 to 230, 235 to 255, and 266 to 286; these read GTLL…AGGM, ILFV…NGLV, FLGI…TGEV, WWLF…YAMV, QIIG…GWSA, LYGL…MLIF, and FLNN…DYLI.

The protein belongs to the UbiA prenyltransferase family. Requires Mg(2+) as cofactor.

The protein localises to the cell inner membrane. The enzyme catalyses all-trans-octaprenyl diphosphate + 4-hydroxybenzoate = 4-hydroxy-3-(all-trans-octaprenyl)benzoate + diphosphate. It functions in the pathway cofactor biosynthesis; ubiquinone biosynthesis. Its function is as follows. Catalyzes the prenylation of para-hydroxybenzoate (PHB) with an all-trans polyprenyl group. Mediates the second step in the final reaction sequence of ubiquinone-8 (UQ-8) biosynthesis, which is the condensation of the polyisoprenoid side chain with PHB, generating the first membrane-bound Q intermediate 3-octaprenyl-4-hydroxybenzoate. This chain is 4-hydroxybenzoate octaprenyltransferase, found in Shewanella baltica (strain OS155 / ATCC BAA-1091).